The chain runs to 593 residues: Aspartate--tRNA(Asp/Asn) ligase (593 aa).

Residue Glu-182 participates in L-aspartate binding. Residues 206–209 (QLFK) form an aspartate region. An L-aspartate-binding site is contributed by Arg-228. Residues 228-230 (RDE) and Gln-237 each bind ATP. An L-aspartate-binding site is contributed by His-455. Glu-489 provides a ligand contact to ATP. An L-aspartate-binding site is contributed by Arg-496. 541-544 (GLDR) is an ATP binding site.

It belongs to the class-II aminoacyl-tRNA synthetase family. Type 1 subfamily. In terms of assembly, homodimer.

It localises to the cytoplasm. It carries out the reaction tRNA(Asx) + L-aspartate + ATP = L-aspartyl-tRNA(Asx) + AMP + diphosphate. Functionally, aspartyl-tRNA synthetase with relaxed tRNA specificity since it is able to aspartylate not only its cognate tRNA(Asp) but also tRNA(Asn). Reaction proceeds in two steps: L-aspartate is first activated by ATP to form Asp-AMP and then transferred to the acceptor end of tRNA(Asp/Asn). The protein is Aspartate--tRNA(Asp/Asn) ligase of Geotalea uraniireducens (strain Rf4) (Geobacter uraniireducens).